The sequence spans 200 residues: Dephospho-CoA kinase (200 aa).

In terms of domain architecture, DPCK spans 4 to 200; it reads VIGLTGGIAS…AILKKWNIID (197 aa). 12 to 17 contacts ATP; the sequence is ASGKST.

Belongs to the CoaE family.

The protein localises to the cytoplasm. The catalysed reaction is 3'-dephospho-CoA + ATP = ADP + CoA + H(+). It participates in cofactor biosynthesis; coenzyme A biosynthesis; CoA from (R)-pantothenate: step 5/5. Functionally, catalyzes the phosphorylation of the 3'-hydroxyl group of dephosphocoenzyme A to form coenzyme A. The sequence is that of Dephospho-CoA kinase from Bacillus anthracis.